A 274-amino-acid chain; its full sequence is Formamidopyrimidine-DNA glycosylase (274 aa).

The Schiff-base intermediate with DNA role is filled by P2. E3 acts as the Proton donor in catalysis. K60 serves as the catalytic Proton donor; for beta-elimination activity. DNA-binding residues include H93 and R112. The FPG-type zinc-finger motif lies at 240–274 (DVYGRKGETCRQCGTPITKTVVGGRGTHFCSVCQK). Catalysis depends on R264, which acts as the Proton donor; for delta-elimination activity.

The protein belongs to the FPG family. As to quaternary structure, monomer. Zn(2+) serves as cofactor.

The catalysed reaction is Hydrolysis of DNA containing ring-opened 7-methylguanine residues, releasing 2,6-diamino-4-hydroxy-5-(N-methyl)formamidopyrimidine.. It catalyses the reaction 2'-deoxyribonucleotide-(2'-deoxyribose 5'-phosphate)-2'-deoxyribonucleotide-DNA = a 3'-end 2'-deoxyribonucleotide-(2,3-dehydro-2,3-deoxyribose 5'-phosphate)-DNA + a 5'-end 5'-phospho-2'-deoxyribonucleoside-DNA + H(+). Involved in base excision repair of DNA damaged by oxidation or by mutagenic agents. Acts as a DNA glycosylase that recognizes and removes damaged bases. Has a preference for oxidized purines, such as 7,8-dihydro-8-oxoguanine (8-oxoG). Has AP (apurinic/apyrimidinic) lyase activity and introduces nicks in the DNA strand. Cleaves the DNA backbone by beta-delta elimination to generate a single-strand break at the site of the removed base with both 3'- and 5'-phosphates. The sequence is that of Formamidopyrimidine-DNA glycosylase (mutM) from Halalkalibacterium halodurans (strain ATCC BAA-125 / DSM 18197 / FERM 7344 / JCM 9153 / C-125) (Bacillus halodurans).